Consider the following 486-residue polypeptide: Monocarboxylate transporter 12 (486 aa).

Over 1–9 the chain is Cytoplasmic; it reads MTKITRVSL. The next 12 helical transmembrane spans lie at 10–30, 58–78, 86–106, 115–135, 148–168, 177–197, 253–273, 289–309, 320–340, 353–373, 383–403, and 410–430; these read ASPP…LVTI, AWIH…GSVV, AGIM…SFAT, LGVL…AMVG, IAMS…QLLI, LLIL…MRPI, FVVL…LFVY, AFLM…FGWL, YVCY…LPML, FGYF…EIVG, VVYF…GWLV, and TAAF…LGFV. Residues 431 to 486 lie on the Cytoplasmic side of the membrane; that stretch reads RIVKRMKRTQVPFPVKDSDPKLQLWTNGSVAYSVARELDQKDEEPLPKARSGCNLT.

This sequence belongs to the major facilitator superfamily. Monocarboxylate porter (TC 2.A.1.13) family. Interacts with isoform 2 of BSG; this interaction is required for its localization to the plasma membrane. As to expression, highly expressed in the lung, liver, kidney, and pancreas. Expressed in eye lens.

The protein resides in the cell membrane. It is found in the basolateral cell membrane. It catalyses the reaction creatine(in) = creatine(out). It carries out the reaction guanidinoacetate(in) = guanidinoacetate(out). Creatine uptake is inhibited by carbonyl cyanide 3-chlorophenylhydrazone (CCCP) and by valinomycin. Its function is as follows. Functions as a transporter for creatine and as well for its precursor guanidinoacetate. Transport of creatine and GAA is independent of resting membrane potential and extracellular Na(+), Cl(-), or pH. Contributes to the process of creatine biosynthesis and distribution. This is Monocarboxylate transporter 12 from Mus musculus (Mouse).